Consider the following 523-residue polypeptide: 2,3-bisphosphoglycerate-independent phosphoglycerate mutase (523 aa).

Mn(2+) contacts are provided by D13 and S63. Residue S63 is the Phosphoserine intermediate of the active site. Residues H124, 156–157 (RD), R188, R194, 268–271 (RSDR), and K341 contribute to the substrate site. The Mn(2+) site is built by D408, H412, D449, H450, and H467.

The protein belongs to the BPG-independent phosphoglycerate mutase family. In terms of assembly, monomer. Requires Mn(2+) as cofactor.

The catalysed reaction is (2R)-2-phosphoglycerate = (2R)-3-phosphoglycerate. It functions in the pathway carbohydrate degradation; glycolysis; pyruvate from D-glyceraldehyde 3-phosphate: step 3/5. Its function is as follows. Catalyzes the interconversion of 2-phosphoglycerate and 3-phosphoglycerate. In Salinibacter ruber (strain DSM 13855 / M31), this protein is 2,3-bisphosphoglycerate-independent phosphoglycerate mutase.